The primary structure comprises 493 residues: GPI alpha-1,6-mannosyltransferase 2 (493 aa).

The Cytoplasmic segment spans residues 1–13; sequence MWPQDPSRKEVLR. A helical membrane pass occupies residues 14 to 34; the sequence is FAVSCRILTLMLQALFNAIIP. At 35–77 the chain is on the lumenal side; the sequence is DHHAEAFSPPRLAPSGFVDQLVEGLLGGLSHWDAEHFLFIAEH. A helical membrane pass occupies residues 78–98; it reads GYLYEHNFAFFPGFPLALLVG. Over 99–113 the chain is Cytoplasmic; the sequence is TELLRPLRGLLSLRS. A helical membrane pass occupies residues 114–134; that stretch reads CLLISVASLNFLFFMLAAVAL. The Lumenal segment spans residues 135 to 136; that stretch reads HD. A helical transmembrane segment spans residues 137-157; that stretch reads LGCLVLHCPHQSFYAALLFCL. Over 158-161 the chain is Cytoplasmic; sequence SPAN. Residues 162 to 182 traverse the membrane as a helical segment; the sequence is VFLAAGYSEALFALLTFSAMG. Residues 183–192 are Lumenal-facing; that stretch reads QLERGRVWTS. A helical transmembrane segment spans residues 193-213; sequence VLLFAFATGVRSNGLVSVGFL. The Cytoplasmic segment spans residues 214-234; sequence MHSQCQGFFSSLTMLNPLRQL. The helical transmembrane segment at 235–255 threads the bilayer; sequence FKLMASLFLSVFTLGLPFALF. Residues 256–327 are Lumenal-facing; sequence QYYAYTQFCL…KYYELKQVPN (72 aa). Residues 328-348 form a helical membrane-spanning segment; sequence FLLAAPVAILVAWATWTYVTT. Residues 349-378 lie on the Cytoplasmic side of the membrane; it reads HPWLCLTLGLQRSKNNKTLEKPDLGFLSPQ. Residues 379–399 traverse the membrane as a helical segment; the sequence is VFVYVVHAAVLLLFGGLCMHV. At 400–469 the chain is on the lumenal side; sequence QVLTRFLGSS…HWKTCSPVTR (70 aa). Residues 470–490 form a helical membrane-spanning segment; it reads YILGYFLTYWLLGLLLHCNFL. Over 491-493 the chain is Cytoplasmic; sequence PWT.

Belongs to the PIGV family. Post-translationally, not N-glycosylated.

It localises to the endoplasmic reticulum membrane. It functions in the pathway glycolipid biosynthesis; glycosylphosphatidylinositol-anchor biosynthesis. Functionally, alpha-1,6-mannosyltransferase that catalyzes the transfer of the second mannose, via an alpha-1,6 bond, from a dolichol-phosphate-mannose (Dol-P-Man) to the alpha-D-Man-(1-&gt;4)-alpha-D-GlcN-(1-&gt;6)-(1-radyl,2-acyl-sn-glycero-3-phospho)-2-acyl-inositol (also termed H2) intermediate to generate an alpha-D-Man-(1-&gt;6)-alpha-D-Man-(1-&gt;4)-alpha-D-GlcN-(1-&gt;6)-(1-radyl,2-acyl-sn-glycero-3-phospho)-2-acyl-inositol (also termed H3) and participates in the seventh step of the glycosylphosphatidylinositol-anchor biosynthesis. Also transfers the second mannose on a 2-PEtn-alpha-D-Man-(1-&gt;4)-alpha-D-GlcN-(1-&gt;6)-(1-radyl,2-acyl-sn-glycero-3-phospho)-2-acyl-inositol (also termed H5). The chain is GPI alpha-1,6-mannosyltransferase 2 from Homo sapiens (Human).